Consider the following 183-residue polypeptide: NADH dehydrogenase [ubiquinone] iron-sulfur protein 4, mitochondrial (183 aa).

The N-terminal 28 residues, 1–28 (MSALRQVMCRSTASLQLYQANRAAAARW), are a transit peptide targeting the mitochondrion. Serine 181 carries the post-translational modification Phosphoserine.

This sequence belongs to the complex I NDUFS4 subunit family.

The protein resides in the mitochondrion inner membrane. Accessory subunit of the mitochondrial membrane respiratory chain NADH dehydrogenase (Complex I), that is believed not to be involved in catalysis. Complex I functions in the transfer of electrons from NADH to the respiratory chain. The immediate electron acceptor for the enzyme is believed to be ubiquinone. The chain is NADH dehydrogenase [ubiquinone] iron-sulfur protein 4, mitochondrial from Drosophila melanogaster (Fruit fly).